The chain runs to 585 residues: Arginine--tRNA ligase (585 aa).

Positions Ala131–His141 match the 'HIGH' region motif.

It belongs to the class-I aminoacyl-tRNA synthetase family. As to quaternary structure, monomer.

It localises to the cytoplasm. It carries out the reaction tRNA(Arg) + L-arginine + ATP = L-arginyl-tRNA(Arg) + AMP + diphosphate. The sequence is that of Arginine--tRNA ligase from Brucella suis (strain ATCC 23445 / NCTC 10510).